Consider the following 312-residue polypeptide: MEFILSLIGSLLLIICVLVSVAFLTLLERKVLGYIQIRKGPNKVGLMGIPQPFCDAIKLFTKEQTYPLLSNYLSYYISPIFSLFLSLFVWMCMPFFVKLYSFNLGGLFFLCCTSLGVYTVMVAGWSSNSNYALLGGLRAVAQTISYEVSLALILLSFVFLIGSYNMVYFFYYQIYVWFLIILFPMALVWLTISLAETNRTPFDFAEGESELVSGFNVEYSSGGFALIFMAEYASILFMSMLFCVIFLGCDVFNLLFYVKLTFISFIFIWARGTLPRFRYDKLMYLAWKCFLSFSLNYLLFFIGFKILLFSLL.

The next 8 helical transmembrane spans lie at 3-23, 77-97, 104-124, 150-170, 174-194, 226-246, 250-270, and 289-309; these read FILS…SVAF, ISPI…PFFV, LGGL…MVAG, LALI…VYFF, IYVW…TISL, LIFM…CVIF, DVFN…FIWA, and CFLS…ILLF.

Belongs to the complex I subunit 1 family.

Its subcellular location is the mitochondrion inner membrane. It catalyses the reaction a ubiquinone + NADH + 5 H(+)(in) = a ubiquinol + NAD(+) + 4 H(+)(out). In terms of biological role, core subunit of the mitochondrial membrane respiratory chain NADH dehydrogenase (Complex I) that is believed to belong to the minimal assembly required for catalysis. Complex I functions in the transfer of electrons from NADH to the respiratory chain. The immediate electron acceptor for the enzyme is believed to be ubiquinone. This chain is NADH-ubiquinone oxidoreductase chain 1 (mt:ND1), found in Drosophila subobscura (Fruit fly).